Here is a 174-residue protein sequence, read N- to C-terminus: Peptide deformylase (174 aa).

Fe cation contacts are provided by Cys-96 and His-138. Residue Glu-139 is part of the active site. His-142 contacts Fe cation.

This sequence belongs to the polypeptide deformylase family. The cofactor is Fe(2+).

The catalysed reaction is N-terminal N-formyl-L-methionyl-[peptide] + H2O = N-terminal L-methionyl-[peptide] + formate. In terms of biological role, removes the formyl group from the N-terminal Met of newly synthesized proteins. Requires at least a dipeptide for an efficient rate of reaction. N-terminal L-methionine is a prerequisite for activity but the enzyme has broad specificity at other positions. This chain is Peptide deformylase, found in Helicobacter pylori (strain P12).